The sequence spans 231 residues: Orotidine 5'-phosphate decarboxylase (231 aa).

Substrate-binding positions include Asp9, Lys34, 62–71 (DLKLHDIPSV), Thr117, Arg179, Gln188, Gly208, and Arg209. Lys64 (proton donor) is an active-site residue.

The protein belongs to the OMP decarboxylase family. Type 1 subfamily. Homodimer.

It carries out the reaction orotidine 5'-phosphate + H(+) = UMP + CO2. The protein operates within pyrimidine metabolism; UMP biosynthesis via de novo pathway; UMP from orotate: step 2/2. Functionally, catalyzes the decarboxylation of orotidine 5'-monophosphate (OMP) to uridine 5'-monophosphate (UMP). In Aquifex aeolicus (strain VF5), this protein is Orotidine 5'-phosphate decarboxylase.